Reading from the N-terminus, the 352-residue chain is Mas-related G-protein coupled receptor member X2 (352 aa).

Over 1–45 the chain is Extracellular; sequence MEERNISGRDLRVDSNITYWGTNITAVNESNHTGMSFCEVVSCTM. Asn5, Asn16, Asn23, Asn28, and Asn31 each carry an N-linked (GlcNAc...) asparagine glycan. A helical transmembrane segment spans residues 46-66; it reads VFLSLIVALVGLVGNATVLWF. Residues 67 to 75 are Cytoplasmic-facing; the sequence is LGFQMRRNA. The chain crosses the membrane as a helical span at residues 76 to 96; that stretch reads FSVYILNLAGADFLFICFQIG. At 97 to 107 the chain is on the extracellular side; sequence YCFHMILDIDS. The chain crosses the membrane as a helical span at residues 108–128; it reads IPIEIDLFYLVVLNFPYFCGL. Residues 129-155 lie on the Cytoplasmic side of the membrane; sequence SILSAISIERCLSVMWPIWYHCQRPRH. A helical transmembrane segment spans residues 156–176; it reads TSAVICTLLWVLSLVCSLLEG. Residues 177–195 are Extracellular-facing; it reads KECGFLYYTSDPGWCKTFD. The chain crosses the membrane as a helical span at residues 196-216; it reads LITATWLIVLFVALLGSSLAL. Residues 217–239 are Cytoplasmic-facing; the sequence is VITIFWGLHKIPVTRLYVAIVFT. The chain crosses the membrane as a helical span at residues 240–260; sequence VLVFLLFGLPYGIYWFLLVWI. Residues 261–275 lie on the Extracellular side of the membrane; the sequence is EKFYYVLPCSIYPVT. A helical membrane pass occupies residues 276–296; sequence VFLSCVNSSAKPIIYCLVGSI. Residues 297–347 lie on the Cytoplasmic side of the membrane; sequence RHHRFQRKTLKLFLQRAMQDTPEEEECGEMGSSGRSREIKTIWKGLRAALI.

Belongs to the G-protein coupled receptor 1 family. Mas subfamily.

The protein resides in the cell membrane. Functionally, orphan receptor. Probably involved in the function of nociceptive neurons. May regulate nociceptor function and/or development, including the sensation or modulation of pain. The chain is Mas-related G-protein coupled receptor member X2 (Mrgprx2) from Mus musculus (Mouse).